The chain runs to 208 residues: Putative archaetidylserine decarboxylase proenzyme (208 aa).

Catalysis depends on serine 172, which acts as the Schiff-base intermediate with substrate; via pyruvic acid. At serine 172 the chain carries Pyruvic acid (Ser); by autocatalysis.

The protein belongs to the phosphatidylserine decarboxylase family. PSD-A subfamily. In terms of assembly, heterodimer of a large membrane-associated beta subunit and a small pyruvoyl-containing alpha subunit. The cofactor is pyruvate. Is synthesized initially as an inactive proenzyme. Formation of the active enzyme involves a self-maturation process in which the active site pyruvoyl group is generated from an internal serine residue via an autocatalytic post-translational modification. Two non-identical subunits are generated from the proenzyme in this reaction, and the pyruvate is formed at the N-terminus of the alpha chain, which is derived from the carboxyl end of the proenzyme. The post-translation cleavage follows an unusual pathway, termed non-hydrolytic serinolysis, in which the side chain hydroxyl group of the serine supplies its oxygen atom to form the C-terminus of the beta chain, while the remainder of the serine residue undergoes an oxidative deamination to produce ammonia and the pyruvoyl prosthetic group on the alpha chain.

Its subcellular location is the cell membrane. It carries out the reaction archaetidylserine + H(+) = archaetidylethanolamine + CO2. Catalyzes the formation of archaetidylethanolamine (PtdEtn) from archaetidylserine (PtdSer). This is Putative archaetidylserine decarboxylase proenzyme from Methanosarcina mazei (strain ATCC BAA-159 / DSM 3647 / Goe1 / Go1 / JCM 11833 / OCM 88) (Methanosarcina frisia).